A 378-amino-acid chain; its full sequence is Pre-B-cell leukemia transcription factor 4 (378 aa).

Residues 1–15 (MAAPLRPVPPQPAPR) are compositionally biased toward pro residues. Disordered regions lie at residues 1 to 24 (MAAP…APLG) and 100 to 125 (VSRP…PNDN). Residues 22–214 (PLGHDTSDVL…VMTLRSRFLD (193 aa)) enclose the PBC domain. The tract at residues 29 to 107 (DVLQQIMAIT…EGVSRPEKRG (79 aa)) is PBC-A. Residues 109-120 (GAAAGSTATPGG) show a composition bias toward low complexity. The tract at residues 110–214 (AAAGSTATPG…VMTLRSRFLD (105 aa)) is PBC-B. Residues 215–277 (ARRKRRNFSK…NKRIRYKKNT (63 aa)) constitute a DNA-binding region (homeobox; TALE-type). Disordered regions lie at residues 291-320 (ASTV…PLPL) and 355-378 (RAAP…AASN). Positions 356-370 (AAPQPASSPAGESGS) are enriched in low complexity.

The protein belongs to the TALE/PBX homeobox family. As to expression, almost exclusively expressed in testis.

Its subcellular location is the nucleus. This Mus musculus (Mouse) protein is Pre-B-cell leukemia transcription factor 4 (Pbx4).